Consider the following 330-residue polypeptide: Phenylalanine--tRNA ligase alpha subunit (330 aa).

Glutamate 254 serves as a coordination point for Mg(2+).

This sequence belongs to the class-II aminoacyl-tRNA synthetase family. Phe-tRNA synthetase alpha subunit type 1 subfamily. In terms of assembly, tetramer of two alpha and two beta subunits. Mg(2+) is required as a cofactor.

It is found in the cytoplasm. It catalyses the reaction tRNA(Phe) + L-phenylalanine + ATP = L-phenylalanyl-tRNA(Phe) + AMP + diphosphate + H(+). In Neisseria meningitidis serogroup B (strain ATCC BAA-335 / MC58), this protein is Phenylalanine--tRNA ligase alpha subunit (pheS).